A 181-amino-acid polypeptide reads, in one-letter code: CASP-like protein UU-1 (181 aa).

Over 1–30 (MTMELESQEVVVETTTAAAAARAASAAHVR) the chain is Cytoplasmic. The chain crosses the membrane as a helical span at residues 31-51 (TTVALRLLAFAASLAAAVVVA). Topologically, residues 52–65 (TNRQERWGITVTFK) are extracellular. A helical membrane pass occupies residues 66–86 (MFAVWEAFVAINFACAAYALL). Topologically, residues 87–107 (TAVFVKKLVSKHWLHHMDQFT) are cytoplasmic. The helical transmembrane segment at 108 to 128 (VNLQAASTAGAGAVGSVAMWG) threads the bilayer. The Extracellular portion of the chain corresponds to 129 to 147 (NEPSGWYAVCRLYRLYCDR). The chain crosses the membrane as a helical span at residues 148–168 (GAVSLALAFVAFVAFGVASSL). The Cytoplasmic segment spans residues 169–181 (SRYPRAPPPPAPR).

Belongs to the Casparian strip membrane proteins (CASP) family. As to quaternary structure, homodimer and heterodimers.

Its subcellular location is the cell membrane. The protein is CASP-like protein UU-1 of Sorghum bicolor (Sorghum).